The sequence spans 248 residues: Ribosomal RNA small subunit methyltransferase G (248 aa).

S-adenosyl-L-methionine is bound by residues Gly-93, Leu-98, 143 to 144 (AE), and Arg-161.

It belongs to the methyltransferase superfamily. RNA methyltransferase RsmG family.

The protein resides in the cytoplasm. Its function is as follows. Specifically methylates the N7 position of guanine in position 518 of 16S rRNA. This is Ribosomal RNA small subunit methyltransferase G from Mycobacterium leprae (strain Br4923).